The primary structure comprises 88 residues: LKFVVLICLVIMASTSAQQCGDETCGAGTCCAVFSQNHCRRLSQMYDLCSDHSDASPSGNYLFFCPCEPGLHCDRNTWTCTEGSSRSE.

An N-terminal signal peptide occupies residues 1 to 17; sequence LKFVVLICLVIMASTSA. Gln-18 carries the pyrrolidone carboxylic acid modification. Disulfide bonds link Cys-20–Cys-31, Cys-25–Cys-39, Cys-30–Cys-65, Cys-49–Cys-73, and Cys-67–Cys-80. The propeptide occupies 86 to 88; it reads RSE.

The protein belongs to the MIT-like AcTx family. As to expression, expressed by the venom gland.

It localises to the secreted. This Illawarra wisharti (Illawarra funnel-web spider) protein is U1-hexatoxin-Iw1c.